The primary structure comprises 540 residues: Probable tubulin polyglutamylase TTLL2 (540 aa).

The TTL domain occupies 41–384 (LKPLVFRVDE…NGLRSEEKKC (344 aa)). Residues lysine 169, 175 to 176 (RG), 197 to 200 (QKYI), and 210 to 212 (KCD) each bind ATP. Arginine 175 serves as a coordination point for a protein. Residue arginine 236 participates in L-glutamate binding. 255 to 256 (TN) provides a ligand contact to ATP. Positions 258 and 278 each coordinate L-glutamate. Mg(2+) is bound by residues aspartate 330, glutamate 343, and asparagine 345. Lysine 361 is an L-glutamate binding site. The tract at residues 479–499 (SQSQPHKMKGPAGDLPEAGST) is disordered.

Belongs to the tubulin--tyrosine ligase family. Mg(2+) is required as a cofactor. In terms of tissue distribution, highly expressed in brain, kidney, liver and testis. Expressed in heart, lung, muscle and spleen.

Functionally, probable tubulin polyglutamylase that generates side chains of glutamate on the gamma-carboxyl group of specific glutamate residues within the C-terminal tail of target proteins. Similar to TTLL1, may acquire enzymatic activity only in complex with other proteins as it is most likely lacking domains important for autonomous activity. Probably involved in the side-chain initiation step of the polyglutamylation reaction rather than the elongation step. This Mus musculus (Mouse) protein is Probable tubulin polyglutamylase TTLL2.